The following is a 109-amino-acid chain: Hainantoxin-XVIII-3 (109 aa).

The first 18 residues, 1-18 (MKLSIIIIATSLVIAVVA), serve as a signal peptide directing secretion. Positions 19-46 (FPSKDSKAIENDKTEQRMEIVVQETARA) are excised as a propeptide. 4 disulfide bridges follow: Cys-47–Cys-62, Cys-55–Cys-68, Cys-59–Cys-108, and Cys-61–Cys-81.

The protein belongs to the neurotoxin 25 family. F7 subfamily. Expressed by the venom gland.

The protein localises to the secreted. Its function is as follows. Putative ion channel inhibitor. This Cyriopagopus hainanus (Chinese bird spider) protein is Hainantoxin-XVIII-3.